We begin with the raw amino-acid sequence, 427 residues long: Diaminobutyrate--2-oxoglutarate transaminase (427 aa).

Lys269 bears the N6-(pyridoxal phosphate)lysine mark.

It belongs to the class-III pyridoxal-phosphate-dependent aminotransferase family. It depends on pyridoxal 5'-phosphate as a cofactor.

It catalyses the reaction L-2,4-diaminobutanoate + 2-oxoglutarate = L-aspartate 4-semialdehyde + L-glutamate. The protein operates within amine and polyamine biosynthesis; ectoine biosynthesis; L-ectoine from L-aspartate 4-semialdehyde: step 1/3. In terms of biological role, catalyzes reversively the conversion of L-aspartate beta-semialdehyde (ASA) to L-2,4-diaminobutyrate (DABA) by transamination with L-glutamate. This chain is Diaminobutyrate--2-oxoglutarate transaminase (ectB), found in Marinococcus halophilus.